A 170-amino-acid polypeptide reads, in one-letter code: MDVKWDSMTFDEMEEVKRNVFFTTLEQLKGWARSNSLWPLTFGLACCAIEMMAVGGAHYDLDRFGSFFRASPRQSDVMIVSGTVTKKMAPLLRRLYDQMPEPKWVIAMGSCATAGGPYVKSYSVVKGVDQIVPVDVYIPGCPPNPAALIYGIHKLKEKIRLEAKTGKKVL.

The [4Fe-4S] cluster site is built by cysteine 46, cysteine 47, cysteine 111, and cysteine 141.

This sequence belongs to the complex I 20 kDa subunit family. As to quaternary structure, NDH-1 is composed of 14 different subunits. Subunits NuoB, C, D, E, F, and G constitute the peripheral sector of the complex. The cofactor is [4Fe-4S] cluster.

The protein resides in the cell membrane. It carries out the reaction a quinone + NADH + 5 H(+)(in) = a quinol + NAD(+) + 4 H(+)(out). Functionally, NDH-1 shuttles electrons from NADH, via FMN and iron-sulfur (Fe-S) centers, to quinones in the respiratory chain. The immediate electron acceptor for the enzyme in this species is believed to be a menaquinone. Couples the redox reaction to proton translocation (for every two electrons transferred, four hydrogen ions are translocated across the cytoplasmic membrane), and thus conserves the redox energy in a proton gradient. This chain is NADH-quinone oxidoreductase subunit B, found in Geobacillus thermodenitrificans (strain NG80-2).